The chain runs to 431 residues: Enolase (431 aa).

Gln167 contributes to the (2R)-2-phosphoglycerate binding site. Residue Glu209 is the Proton donor of the active site. Mg(2+) is bound by residues Asp246, Glu289, and Asp316. (2R)-2-phosphoglycerate contacts are provided by Lys341, Arg370, Ser371, and Lys392. Lys341 serves as the catalytic Proton acceptor.

The protein belongs to the enolase family. As to quaternary structure, component of the RNA degradosome, a multiprotein complex involved in RNA processing and mRNA degradation. The cofactor is Mg(2+).

It localises to the cytoplasm. It is found in the secreted. The protein resides in the cell surface. The enzyme catalyses (2R)-2-phosphoglycerate = phosphoenolpyruvate + H2O. The protein operates within carbohydrate degradation; glycolysis; pyruvate from D-glyceraldehyde 3-phosphate: step 4/5. In terms of biological role, catalyzes the reversible conversion of 2-phosphoglycerate (2-PG) into phosphoenolpyruvate (PEP). It is essential for the degradation of carbohydrates via glycolysis. The polypeptide is Enolase (Hahella chejuensis (strain KCTC 2396)).